Consider the following 211-residue polypeptide: Endo-1,4-beta-xylanase A (211 aa).

The first 27 residues, 1–27, serve as a signal peptide directing secretion; it reads MKVTAAFAGLLVTAFAAPVPEPVLVSR. In terms of domain architecture, GH11 spans 28–210; that stretch reads SAGINYVQNY…GAGSASVTIS (183 aa). Glu-106 serves as the catalytic Nucleophile. Cys-119 and Cys-138 are oxidised to a cystine. Glu-197 functions as the Proton donor in the catalytic mechanism.

It belongs to the glycosyl hydrolase 11 (cellulase G) family.

Its subcellular location is the secreted. The catalysed reaction is Endohydrolysis of (1-&gt;4)-beta-D-xylosidic linkages in xylans.. The protein operates within glycan degradation; xylan degradation. Endo-1,4-beta-xylanase involved in the hydrolysis of xylan, a major structural heterogeneous polysaccharide found in plant biomass representing the second most abundant polysaccharide in the biosphere, after cellulose. The sequence is that of Endo-1,4-beta-xylanase A (xynA) from Aspergillus niger.